Here is a 91-residue protein sequence, read N- to C-terminus: Probable Fe(2+)-trafficking protein (91 aa).

Belongs to the Fe(2+)-trafficking protein family.

Functionally, could be a mediator in iron transactions between iron acquisition and iron-requiring processes, such as synthesis and/or repair of Fe-S clusters in biosynthetic enzymes. The polypeptide is Probable Fe(2+)-trafficking protein (Thiobacillus denitrificans (strain ATCC 25259 / T1)).